The sequence spans 286 residues: Putative WUSCHEL-related homeobox 2 (286 aa).

2 disordered regions span residues 1-25 (MAPAVQQQQSGGGGGSTGAAAVGST) and 128-152 (SSSSSCGGGLNEDANSLLSPTSPTT). The homeobox; WUS-type DNA-binding region spans 23-87 (GSTTRWCPTP…NHKARDRQKL (65 aa)).

Belongs to the WUS homeobox family.

It localises to the nucleus. Transcription factor which may be involved in developmental processes. In Oryza sativa subsp. indica (Rice), this protein is Putative WUSCHEL-related homeobox 2 (WOX2).